Consider the following 428-residue polypeptide: MSAKWEKLEGNQGVLTVEVDAEKVNEGLDEAFKKVVKKVQIPGFRKGKIPRSLFEKRFGVESLYADALDILLPEAYAKAVEETGIEPVDRPEIDVEQMEKGKSLIFTAKVTVKPEVTLGEYKGLEVEKLDDTVTDEDVEQELKRLQERHAELVVKEEGTVENGDTVVIDFEGFVDGEAFEGGKAENYSLVIGSGTFIPGFEEQLIGMAAGEEKDIEVTFPEEYHAEQLAGKPAVFKIKLHEIKTKQLPALDDEFAKDVDEEVETLDALKEKIKERLTKEKKEEAEAALRDAVVQKATENAQMDIPEVMVKNETDRMIREFEQRLQMQGLNLDLYYQFSGQDEAALREQMKEEAEKRVRVTLTLEAIVKAENIDVTEEEVEKELQEMASLYNLSVDKLKELLGTLDGLKEDLKMRKAIDFLVENSKVVA.

Positions 163–248 (GDTVVIDFEG…LHEIKTKQLP (86 aa)) constitute a PPIase FKBP-type domain.

Belongs to the FKBP-type PPIase family. Tig subfamily.

It localises to the cytoplasm. It catalyses the reaction [protein]-peptidylproline (omega=180) = [protein]-peptidylproline (omega=0). Functionally, involved in protein export. Acts as a chaperone by maintaining the newly synthesized protein in an open conformation. Functions as a peptidyl-prolyl cis-trans isomerase. The chain is Trigger factor from Anoxybacillus flavithermus (strain DSM 21510 / WK1).